An 88-amino-acid polypeptide reads, in one-letter code: Small ribosomal subunit protein uS17 (88 aa).

Belongs to the universal ribosomal protein uS17 family. In terms of assembly, part of the 30S ribosomal subunit.

Its function is as follows. One of the primary rRNA binding proteins, it binds specifically to the 5'-end of 16S ribosomal RNA. This chain is Small ribosomal subunit protein uS17, found in Synechococcus sp. (strain WH7803).